Here is a 75-residue protein sequence, read N- to C-terminus: Large ribosomal subunit protein uL29 (75 aa).

It belongs to the universal ribosomal protein uL29 family.

This chain is Large ribosomal subunit protein uL29, found in Ureaplasma urealyticum serovar 10 (strain ATCC 33699 / Western).